The following is a 546-amino-acid chain: CTP synthase (546 aa).

The interval 1 to 266 is amidoligase domain; the sequence is MTTRYIFVTG…DDLVVKRFGL (266 aa). S14 provides a ligand contact to CTP. S14 contacts UTP. ATP contacts are provided by residues 15-20 and D72; that span reads SLGKGI. Residues D72 and E140 each coordinate Mg(2+). CTP is bound by residues 147-149, 187-192, and K223; these read DIE and KTKPTQ. UTP is bound by residues 187 to 192 and K223; that span reads KTKPTQ. Residue 239 to 241 coordinates ATP; that stretch reads KDV. Positions 291–542 constitute a Glutamine amidotransferase type-1 domain; it reads VIGMVGKYIE…VAAASAHQKR (252 aa). G352 is a binding site for L-glutamine. The active-site Nucleophile; for glutamine hydrolysis is the C379. L-glutamine is bound by residues 380-383, E403, and R470; that span reads LGMQ. Residues H515 and E517 contribute to the active site.

The protein belongs to the CTP synthase family. In terms of assembly, homotetramer.

It carries out the reaction UTP + L-glutamine + ATP + H2O = CTP + L-glutamate + ADP + phosphate + 2 H(+). The enzyme catalyses L-glutamine + H2O = L-glutamate + NH4(+). The catalysed reaction is UTP + NH4(+) + ATP = CTP + ADP + phosphate + 2 H(+). It participates in pyrimidine metabolism; CTP biosynthesis via de novo pathway; CTP from UDP: step 2/2. With respect to regulation, allosterically activated by GTP, when glutamine is the substrate; GTP has no effect on the reaction when ammonia is the substrate. The allosteric effector GTP functions by stabilizing the protein conformation that binds the tetrahedral intermediate(s) formed during glutamine hydrolysis. Inhibited by the product CTP, via allosteric rather than competitive inhibition. In terms of biological role, catalyzes the ATP-dependent amination of UTP to CTP with either L-glutamine or ammonia as the source of nitrogen. Regulates intracellular CTP levels through interactions with the four ribonucleotide triphosphates. This chain is CTP synthase, found in Shewanella sp. (strain MR-7).